The sequence spans 315 residues: Aspartate carbamoyltransferase catalytic subunit (315 aa).

2 residues coordinate carbamoyl phosphate: arginine 64 and threonine 65. Lysine 92 contributes to the L-aspartate binding site. Carbamoyl phosphate is bound by residues arginine 114, histidine 142, and glutamine 145. The L-aspartate site is built by arginine 176 and arginine 230. Glycine 271 and proline 272 together coordinate carbamoyl phosphate.

Belongs to the aspartate/ornithine carbamoyltransferase superfamily. ATCase family. Heterododecamer (2C3:3R2) of six catalytic PyrB chains organized as two trimers (C3), and six regulatory PyrI chains organized as three dimers (R2).

The enzyme catalyses carbamoyl phosphate + L-aspartate = N-carbamoyl-L-aspartate + phosphate + H(+). It functions in the pathway pyrimidine metabolism; UMP biosynthesis via de novo pathway; (S)-dihydroorotate from bicarbonate: step 2/3. Functionally, catalyzes the condensation of carbamoyl phosphate and aspartate to form carbamoyl aspartate and inorganic phosphate, the committed step in the de novo pyrimidine nucleotide biosynthesis pathway. The sequence is that of Aspartate carbamoyltransferase catalytic subunit from Lawsonia intracellularis (strain PHE/MN1-00).